The sequence spans 183 residues: Threonylcarbamoyl-AMP synthase (183 aa).

In terms of domain architecture, YrdC-like spans 1–183 (MNITQIIEKL…LFTNQLVRQG (183 aa)).

This sequence belongs to the SUA5 family. TsaC subfamily.

It is found in the cytoplasm. The catalysed reaction is L-threonine + hydrogencarbonate + ATP = L-threonylcarbamoyladenylate + diphosphate + H2O. Required for the formation of a threonylcarbamoyl group on adenosine at position 37 (t(6)A37) in tRNAs that read codons beginning with adenine. Catalyzes the conversion of L-threonine, HCO(3)(-)/CO(2) and ATP to give threonylcarbamoyl-AMP (TC-AMP) as the acyladenylate intermediate, with the release of diphosphate. The chain is Threonylcarbamoyl-AMP synthase from Histophilus somni (strain 2336) (Haemophilus somnus).